The following is a 798-amino-acid chain: Heterogeneous nuclear ribonucleoprotein U (798 aa).

Position 2 is an N-acetylserine (serine 2). Serine 4 bears the Phosphoserine mark. The SAP domain maps to valine 8–leucine 42. N6-acetyllysine is present on residues lysine 17 and lysine 21. Residues alanine 41–arginine 229 form a disordered region. Serine 58 carries the post-translational modification Phosphoserine. 2 stretches are compositionally biased toward low complexity: residues alanine 71 to glycine 80 and glutamate 103 to glycine 113. Acidic residues-rich tracts occupy residues alanine 114 to aspartate 128 and glutamate 134 to glycine 147. Residues glycine 153 to glutamine 169 show a composition bias toward low complexity. Lysine 179 is subject to N6-acetyllysine. An ADP-ribosylserine modification is found at serine 180. Residues alanine 192–alanine 203 show a composition bias toward low complexity. Residues glycine 207–arginine 229 are compositionally biased toward basic and acidic residues. Residue arginine 229 is modified to Citrulline. Lysine 239 is modified (N6-acetyllysine; alternate). Residue lysine 239 forms a Glycyl lysine isopeptide (Lys-Gly) (interchain with G-Cter in SUMO1); alternate linkage. Lysine 239 participates in a covalent cross-link: Glycyl lysine isopeptide (Lys-Gly) (interchain with G-Cter in SUMO2); alternate. Tyrosine 240 carries the phosphotyrosine modification. A phosphoserine mark is found at serine 241 and serine 245. The B30.2/SPRY domain occupies arginine 242 to lysine 438. Threonine 260 bears the Phosphothreonine mark. Lysine 326 is modified (N6-acetyllysine). An ATPase domain region spans residues proline 462–glutamate 646. Residue lysine 469 forms a Glycyl lysine isopeptide (Lys-Gly) (interchain with G-Cter in SUMO2) linkage. Glycine 478–threonine 485 contributes to the ATP binding site. N6-acetyllysine; alternate is present on residues lysine 490 and lysine 498. Residues lysine 490 and lysine 498 each participate in a glycyl lysine isopeptide (Lys-Gly) (interchain with G-Cter in SUMO2); alternate cross-link. Position 506 is a phosphothreonine (threonine 506). A Glycyl lysine isopeptide (Lys-Gly) (interchain with G-Cter in SUMO2) cross-link involves residue lysine 510. Residue lysine 525 is modified to N6-acetyllysine. Lysine 539 carries the N6-acetyllysine; alternate modification. Lysine 539 participates in a covalent cross-link: Glycyl lysine isopeptide (Lys-Gly) (interchain with G-Cter in SUMO2); alternate. A Glycyl lysine isopeptide (Lys-Gly) (interchain with G-Cter in SUMO2) cross-link involves residue lysine 548. At threonine 556 the chain carries Phosphothreonine. Glycyl lysine isopeptide (Lys-Gly) (interchain with G-Cter in SUMO2) cross-links involve residues lysine 583 and lysine 600. An actin-binding region spans residues glutamate 585–lysine 600. The residue at position 609 (lysine 609) is an N6-acetyllysine; alternate. Lysine 609 is covalently cross-linked (Glycyl lysine isopeptide (Lys-Gly) (interchain with G-Cter in SUMO2); alternate). Positions aspartate 624 to leucine 651 form a coiled coil. Residues lysine 638 and lysine 644 each participate in a glycyl lysine isopeptide (Lys-Gly) (interchain with G-Cter in SUMO2) cross-link. Over residues glutamate 645–glutamine 657 the composition is skewed to basic and acidic residues. Positions glutamate 645 to proline 727 are disordered. Arginine 676 carries the omega-N-methylarginine modification. Residues glycine 684 to glycine 702 show a composition bias toward gly residues. The RNA-binding RGG-box stretch occupies residues methionine 688 to arginine 713. Residues arginine 689, arginine 694, and arginine 701 each carry the asymmetric dimethylarginine modification. 2 positions are modified to asymmetric dimethylarginine; alternate: arginine 707 and arginine 713. 2 positions are modified to omega-N-methylarginine; alternate: arginine 707 and arginine 713. The segment covering arginine 713–glycine 723 has biased composition (gly residues). Arginine 728 and arginine 735 each carry asymmetric dimethylarginine. The disordered stretch occupies residues asparagine 743 to serine 772. The residue at position 787 (lysine 787) is an N6-acetyllysine; alternate. A Glycyl lysine isopeptide (Lys-Gly) (interchain with G-Cter in SUMO2); alternate cross-link involves residue lysine 787.

As to quaternary structure, oligomer (via ATPase domain and RNA-binding RGG-box region); oligomerization occurs upon ATP-binding in a chromatin-associated RNAs (caRNAs)- and transcription-dependent manner and is required for chromatin decompaction. ATP hydrolysis is required to cycle from an oligomeric to monomeric state to compact chromatin. Component of the coding region determinant (CRD)-mediated complex, composed of DHX9, HNRNPU, IGF2BP1, SYNCRIP and YBX1. Identified in the spliceosome C complex. Identified in a IGF2BP1-dependent mRNP granule complex containing untranslated mRNAs. Associates with heterogeneous nuclear ribonucleoprotein (hnRNP) particles. Associates (via middle region) with the C-terminal domain (CTD) RNA polymerase II (Pol II) holoenzyme; this association occurs in a RNA-independent manner. Associates (via middle region) with the core-TFIIH basal transcription factor complex; this association inhibits the CTD phosphorylation of RNA polymerase II holoenzyme by down-regulating TFIIH kinase activity. Associates with the telomerase holoenzyme complex. Associates with spindle microtubules (MTs) in a TPX2-dependent manner. Interacts (via C-terminus) with actin; this interaction is direct and mediates association with the phosphorylated CTD of RNA polymerase II and is disrupted in presence of the long non-coding H19 RNA. Interacts with AURKA. Interacts (via C-terminus) with CBX5; this interaction is, at least in part, RNA-dependent. Interacts with CR2. Interacts with CRY1. Interacts (via C-terminus) with EP300; this interaction enhances DNA-binding to nuclear scaffold/matrix attachment region (S/MAR) elements. Interacts with ERBB4. Interacts with GEMIN5. Interacts with IGF2BP1. Interacts with IGF2BP2 and IGF2BP3. Interacts with NCL; this interaction occurs during mitosis. Interacts (via C-terminus) with NR3C1 (via C-terminus). Interacts with PLK1; this interaction induces phosphorylation of HNRNPU at Ser-58 in mitosis. Interacts with POU3F4. Interacts with SMARCA4; this interaction occurs in embryonic stem cells and stimulates global Pol II-mediated transcription. Interacts (via C-terminus) with TOP2A; this interaction protects the topoisomerase TOP2A from degradation and positively regulates the relaxation of supercoiled DNA by TOP2A in a RNA-dependent manner. Interacts with TPX2; this interaction recruits HNRNPU to spindle microtubules (MTs). Interacts with UBQLN2. Interacts (via RNA-binding RGG-box region) with ZBTB7B; the interaction facilitates the recruitment of long non-coding RNA Blnc1 by ZBTB7B. Interacts with ERCC6. Cleaved at Asp-94 by CASP3 during T-cell apoptosis, resulting in a loss of DNA- and chromatin-binding activities. Post-translationally, extensively phosphorylated. Phosphorylated on Ser-58 by PLK1 and dephosphorylated by protein phosphatase 2A (PP2A) in mitosis. In terms of processing, arg-707 and Arg-713 are dimethylated, probably to asymmetric dimethylarginine. Citrullinated by PADI4.

It localises to the nucleus. The protein resides in the nucleus matrix. The protein localises to the chromosome. Its subcellular location is the nucleus speckle. It is found in the cytoplasm. It localises to the cytoskeleton. The protein resides in the microtubule organizing center. The protein localises to the centrosome. Its subcellular location is the centromere. It is found in the kinetochore. It localises to the spindle. The protein resides in the spindle pole. The protein localises to the midbody. Its subcellular location is the cell surface. It is found in the cytoplasmic granule. Its function is as follows. DNA- and RNA-binding protein involved in several cellular processes such as nuclear chromatin organization, telomere-length regulation, transcription, mRNA alternative splicing and stability, Xist-mediated transcriptional silencing and mitotic cell progression. Plays a role in the regulation of interphase large-scale gene-rich chromatin organization through chromatin-associated RNAs (caRNAs) in a transcription-dependent manner, and thereby maintains genomic stability. Required for the localization of the long non-coding Xist RNA on the inactive chromosome X (Xi) and the subsequent initiation and maintenance of X-linked transcriptional gene silencing during X-inactivation. Required for the topoisomerase TOP2A protein stability and activity in a RNA-dependent manner. Plays a role as a RNA polymerase II (Pol II) holoenzyme transcription regulator. Promotes transcription initiation by direct association with the core-TFIIH basal transcription factor complex for the assembly of a functional pre-initiation complex with Pol II in a actin-dependent manner. Blocks Pol II transcription elongation activity by inhibiting the C-terminal domain (CTD) phosphorylation of Pol II and dissociates from Pol II pre-initiation complex prior to productive transcription elongation. Positively regulates CBX5-induced transcriptional gene silencing and retention of CBX5 in the nucleus. Negatively regulates glucocorticoid-mediated transcriptional activation. Key regulator of transcription initiation and elongation in embryonic stem cells upon leukemia inhibitory factor (LIF) signaling. Involved in the long non-coding RNA H19-mediated Pol II transcriptional repression. Participates in the circadian regulation of the core clock component BMAL1 transcription. Plays a role in the regulation of telomere length. Plays a role as a global pre-mRNA alternative splicing modulator by regulating U2 small nuclear ribonucleoprotein (snRNP) biogenesis. Plays a role in mRNA stability. Component of the CRD-mediated complex that promotes MYC mRNA stabilization. Enhances the expression of specific genes, such as tumor necrosis factor TNFA, by regulating mRNA stability, possibly through binding to the 3'-untranslated region (UTR). Plays a role in mitotic cell cycle regulation. Involved in the formation of stable mitotic spindle microtubules (MTs) attachment to kinetochore, spindle organization and chromosome congression. Phosphorylation at Ser-58 by PLK1 is required for chromosome alignement and segregation and progression through mitosis. Also contributes to the targeting of AURKA to mitotic spindle MTs. Binds to double- and single-stranded DNA and RNA, poly(A), poly(C) and poly(G) oligoribonucleotides. Binds to chromatin-associated RNAs (caRNAs). Associates with chromatin to scaffold/matrix attachment region (S/MAR) elements in DNA. Associates with chromatin in a chromatin-associated RNAs (caRNAs)-dependent manner. Binds to the Xist RNA. Binds the long non-coding H19 RNA. Binds to SMN1/2 pre-mRNAs at G/U-rich regions. Binds to small nuclear RNAs (snRNAs). Binds to the 3'-UTR of TNFA mRNA. Binds (via RNA-binding RGG-box region) to the long non-coding Xist RNA; this binding is direct and bridges the Xist RNA and the inactive chromosome X (Xi). Also negatively regulates embryonic stem cell differentiation upon LIF signaling. Required for embryonic development. Binds to brown fat long non-coding RNA 1 (Blnc1); facilitates the recruitment of Blnc1 by ZBTB7B required to drive brown and beige fat development and thermogenesis. This chain is Heterogeneous nuclear ribonucleoprotein U, found in Rattus norvegicus (Rat).